The sequence spans 204 residues: MGASKYMQELWRKKQSDVMRFLLRVRCWQYRQLSALHRAPRPTRPDKARRLGYKAKQGYVIYRVRVRRGGRKRPVPKGATYGKPVHHGVNQLKFARSLQSIAEERAGRHCGGLRVLNSYWVGEDSTYKFFEVILIDTFHKAIRRNPDMQWITKAVHKHREMRGLTSAGKKSRGLGKGHKFHLTIGGSRRAAWRRRNTLQLHRYR.

It belongs to the eukaryotic ribosomal protein eL15 family. Component of the large ribosomal subunit.

It is found in the cytoplasm. Its function is as follows. Component of the large ribosomal subunit. The ribosome is a large ribonucleoprotein complex responsible for the synthesis of proteins in the cell. This chain is Large ribosomal subunit protein eL15 (rpl15), found in Silurus meridionalis (Southern catfish).